A 143-amino-acid polypeptide reads, in one-letter code: MADNARAARMAKRIQQIVAVAIEREIKDPRLEYVTITDTRMTGDLHDASVFYTVRGASIDEEPDVPLAAAALESAKGQLRKIVGDQLSVRFTPTLSFVHDTVPEASAHMEKLLAEARAKDEAVRAQAAQAKPAGEANPYKERN.

The segment at 123-143 (VRAQAAQAKPAGEANPYKERN) is disordered. Positions 124–136 (RAQAAQAKPAGEA) are enriched in low complexity.

The protein belongs to the RbfA family. In terms of assembly, monomer. Binds 30S ribosomal subunits, but not 50S ribosomal subunits or 70S ribosomes.

Its subcellular location is the cytoplasm. Its function is as follows. One of several proteins that assist in the late maturation steps of the functional core of the 30S ribosomal subunit. Associates with free 30S ribosomal subunits (but not with 30S subunits that are part of 70S ribosomes or polysomes). Required for efficient processing of 16S rRNA. May interact with the 5'-terminal helix region of 16S rRNA. The chain is Ribosome-binding factor A from Corynebacterium urealyticum (strain ATCC 43042 / DSM 7109).